The primary structure comprises 344 residues: Phenylalanine--tRNA ligase alpha subunit (344 aa).

Glu-256 provides a ligand contact to Mg(2+).

The protein belongs to the class-II aminoacyl-tRNA synthetase family. Phe-tRNA synthetase alpha subunit type 1 subfamily. In terms of assembly, tetramer of two alpha and two beta subunits. The cofactor is Mg(2+).

Its subcellular location is the cytoplasm. It catalyses the reaction tRNA(Phe) + L-phenylalanine + ATP = L-phenylalanyl-tRNA(Phe) + AMP + diphosphate + H(+). The sequence is that of Phenylalanine--tRNA ligase alpha subunit from Bacillus mycoides (strain KBAB4) (Bacillus weihenstephanensis).